A 277-amino-acid chain; its full sequence is Cis-2,3-dihydrobiphenyl-2,3-diol dehydrogenase (277 aa).

NAD(+) contacts are provided by residues 9 to 36 (LITG…AVLD) and aspartate 59. Serine 142 provides a ligand contact to substrate. Tyrosine 155 (proton acceptor) is an active-site residue. An NAD(+)-binding site is contributed by lysine 159.

The protein belongs to the short-chain dehydrogenases/reductases (SDR) family.

The enzyme catalyses (2R,3S)-3-phenylcyclohexa-3,5-diene-1,2-diol + NAD(+) = biphenyl-2,3-diol + NADH + H(+). The protein operates within xenobiotic degradation; biphenyl degradation; 2-hydroxy-2,4-pentadienoate and benzoate from biphenyl: step 2/4. The protein is Cis-2,3-dihydrobiphenyl-2,3-diol dehydrogenase (bphB) of Paraburkholderia xenovorans (strain LB400).